The sequence spans 122 residues: Prefoldin subunit 1 (122 aa).

Ala2 is modified (N-acetylalanine).

Belongs to the prefoldin subunit beta family. Heterohexamer of two PFD-alpha type and four PFD-beta type subunits.

Binds specifically to cytosolic chaperonin (c-CPN) and transfers target proteins to it. Binds to nascent polypeptide chain and promotes folding in an environment in which there are many competing pathways for nonnative proteins. In Bos taurus (Bovine), this protein is Prefoldin subunit 1 (PFDN1).